The primary structure comprises 658 residues: Glycogen debranching enzyme (658 aa).

The Nucleophile role is filled by Asp-336. Glu-371 (proton donor) is an active-site residue. Residues Glu-459–Gly-484 form a disordered region.

The protein belongs to the glycosyl hydrolase 13 family.

It catalyses the reaction Hydrolysis of (1-&gt;6)-alpha-D-glucosidic linkages to branches with degrees of polymerization of three or four glucose residues in limit dextrin.. It participates in glycan degradation; glycogen degradation. Functionally, removes maltotriose and maltotetraose chains that are attached by 1,6-alpha-linkage to the limit dextrin main chain, generating a debranched limit dextrin. This chain is Glycogen debranching enzyme, found in Salmonella paratyphi B (strain ATCC BAA-1250 / SPB7).